A 147-amino-acid polypeptide reads, in one-letter code: Large ribosomal subunit protein uL15 (147 aa).

The segment covering 1 to 12 (MTLRLNDLKPAD) has biased composition (basic and acidic residues). Positions 1–61 (MTLRLNDLKP…GFEGGQTPMQ (61 aa)) are disordered. A compositionally biased stretch (gly residues) spans 23-33 (RGIGSGLGKTA). Positions 34–47 (GRGHKGSFARKGGG) are enriched in basic residues.

It belongs to the universal ribosomal protein uL15 family. In terms of assembly, part of the 50S ribosomal subunit.

Binds to the 23S rRNA. This Xanthomonas oryzae pv. oryzae (strain MAFF 311018) protein is Large ribosomal subunit protein uL15.